The chain runs to 1330 residues: Pre-mRNA-splicing factor CWC22 homolog (1330 aa).

The tract at residues 1–377 is disordered; sequence MGESDAESDS…AAKITERQRK (377 aa). Over residues 9–36 the composition is skewed to low complexity; the sequence is DSSSNSSSSDTSSGSDSDARSESSSSES. A compositionally biased stretch (basic and acidic residues) spans 46-94; sequence QEESAKDAKKTDDTDRGEKRAKERDAGQDEQPTEQKKTPAAEPRSERQH. Positions 99 to 113 are enriched in low complexity; it reads AGVEKQQEEAVAAAE. Basic and acidic residues predominate over residues 115 to 135; sequence ESEKLNEAKKVETPVQRKEEA. Polar residues predominate over residues 138-148; it reads SSVTKELNSPK. The segment covering 149 to 166 has biased composition (basic and acidic residues); sequence AQEENAARELEERRKDEE. The segment covering 168–177 has biased composition (polar residues); the sequence is PVTTNGSSKE. Phosphothreonine occurs at positions 191 and 201. Composition is skewed to basic and acidic residues over residues 191 to 201 and 208 to 236; these read TADHIEEGEIT and LPTKEEKKAVASKSPPKETQRKQSRSPDG. Phosphoserine occurs at positions 219 and 221. Residues 252–277 are compositionally biased toward basic residues; sequence SRRRRRSRSKGSRTRSRSKSPIRRRS. Composition is skewed to basic and acidic residues over residues 278–307 and 316–325; these read NSLERRRVERQRRHEERDKRDEERAKEREK and SSRRRDDSRE. Positions 355–366 are enriched in low complexity; sequence TETNADNETVTE. An MIF4G domain is found at 420–603; the sequence is KKSIHGYINK…EVLFQIRKDG (184 aa). A disordered region spans residues 660 to 697; that stretch reads REILGSDDGSSSGSGSGSDSDSDSDGESGSDAEKKAEA. A compositionally biased stretch (low complexity) spans 665–678; it reads SDDGSSSGSGSGSD. Residues 679–689 are compositionally biased toward acidic residues; it reads SDSDSDGESGS. The 117-residue stretch at 710 to 826 folds into the MI domain; the sequence is ALRRTIYLTI…SWDVLECIQL (117 aa). A disordered region spans residues 926–1330; sequence FRDGSAPAGN…RSSRRSKGRS (405 aa). Low complexity predominate over residues 941–951; sequence SSSSSSSSSSD. The segment covering 952 to 963 has biased composition (acidic residues); it reads TDSEDSSEEDSS. Positions 964–976 are enriched in low complexity; the sequence is SDSSSESSSSDSS. Residues 980–1012 show a composition bias toward basic residues; that stretch reads KKKRKRKDKDKKKSKKATKEKSKKTKNKKKKKK. Basic and acidic residues predominate over residues 1013 to 1033; it reads AEKEQEKEKEKQRKSKKEKEK. Residues 1034 to 1054 show a composition bias toward basic residues; the sequence is DKKRKKEEKKAAKKKSKHRRK. The segment covering 1072 to 1082 has biased composition (low complexity); that stretch reads SESSDSSNSSS. Over residues 1089–1110 the composition is skewed to basic and acidic residues; it reads PQAKIKRQEHVEKNKFRGRTQD. Threonine 1108 carries the phosphothreonine modification. A phosphoserine mark is found at serine 1111, serine 1121, serine 1180, and serine 1181. 2 stretches are compositionally biased toward basic and acidic residues: residues 1133–1195 and 1203–1320; these read RRRD…VAHD and SRSY…SRRE. Position 1182 is a phosphotyrosine (tyrosine 1182). Residues 1321–1330 show a composition bias toward basic residues; sequence RSSRRSKGRS.

This sequence belongs to the CWC22 family. Component of the spliceosome C complex. Interacts with eIF4AIII.

It localises to the nucleus speckle. Required for pre-mRNA splicing and for exon-junction complex (EJC) assembly. Hinders eIF4AIII from non-specifically binding RNA and escorts it to the splicing machinery to promote EJC assembly on mature mRNAs. This chain is Pre-mRNA-splicing factor CWC22 homolog (ncm), found in Drosophila melanogaster (Fruit fly).